The sequence spans 94 residues: Large ribosomal subunit protein bL28 (94 aa).

Belongs to the bacterial ribosomal protein bL28 family.

In Hyphomonas neptunium (strain ATCC 15444), this protein is Large ribosomal subunit protein bL28.